Reading from the N-terminus, the 347-residue chain is Sesquiterpene synthase M422DRAFT_47084 (347 aa).

Mg(2+)-binding residues include aspartate 93, asparagine 228, serine 232, and glutamate 236. A DDXXD motif motif is present at residues 93–97 (DEYTD). 2 residues coordinate (2E,6E)-farnesyl diphosphate: arginine 318 and tyrosine 319.

This sequence belongs to the terpene synthase family. It depends on Mg(2+) as a cofactor.

It catalyses the reaction (2E,6E)-farnesyl diphosphate = viridiflorene + diphosphate. In terms of biological role, terpene cyclase that catalyzes the cyclization of farnesyl diphosphate (FPP) to viridiflorene and viridiflorol. The protein is Sesquiterpene synthase M422DRAFT_47084 of Sphaerobolus stellatus (strain SS14).